A 288-amino-acid chain; its full sequence is Hyaluronidase (288 aa).

N-linked (GlcNAc...) asparagine glycosylation is present at Asn-36. The Proton donor role is filled by Glu-66. A disulfide bridge links Cys-142 with Cys-154. Asn-282 is a glycosylation site (N-linked (GlcNAc...) asparagine).

Belongs to the glycosyl hydrolase 56 family. In terms of tissue distribution, expressed by the venom gland.

Its subcellular location is the secreted. It catalyses the reaction Random hydrolysis of (1-&gt;4)-linkages between N-acetyl-beta-D-glucosamine and D-glucuronate residues in hyaluronate.. In terms of biological role, hydrolyzes high molecular weight hyaluronic acid to produce small oligosaccharides. This Polybia paulista (Neotropical social wasp) protein is Hyaluronidase.